A 159-amino-acid chain; its full sequence is 6,7-dimethyl-8-ribityllumazine synthase (159 aa).

Residues Phe-22, 56 to 58 (AFE), and 80 to 82 (AVI) contribute to the 5-amino-6-(D-ribitylamino)uracil site. 85-86 (AT) is a (2S)-2-hydroxy-3-oxobutyl phosphate binding site. The active-site Proton donor is the His-88. Phe-113 provides a ligand contact to 5-amino-6-(D-ribitylamino)uracil. Arg-127 provides a ligand contact to (2S)-2-hydroxy-3-oxobutyl phosphate.

Belongs to the DMRL synthase family.

The enzyme catalyses (2S)-2-hydroxy-3-oxobutyl phosphate + 5-amino-6-(D-ribitylamino)uracil = 6,7-dimethyl-8-(1-D-ribityl)lumazine + phosphate + 2 H2O + H(+). Its pathway is cofactor biosynthesis; riboflavin biosynthesis; riboflavin from 2-hydroxy-3-oxobutyl phosphate and 5-amino-6-(D-ribitylamino)uracil: step 1/2. In terms of biological role, catalyzes the formation of 6,7-dimethyl-8-ribityllumazine by condensation of 5-amino-6-(D-ribitylamino)uracil with 3,4-dihydroxy-2-butanone 4-phosphate. This is the penultimate step in the biosynthesis of riboflavin. This chain is 6,7-dimethyl-8-ribityllumazine synthase, found in Lactiplantibacillus plantarum (strain ATCC BAA-793 / NCIMB 8826 / WCFS1) (Lactobacillus plantarum).